Consider the following 260-residue polypeptide: Transcription factor BEE 1 (260 aa).

The segment at E118–E139 is disordered. In terms of domain architecture, bHLH spans Q151–L201.

The protein localises to the nucleus. Positive regulator of brassinosteroid signaling. The protein is Transcription factor BEE 1 (BEE1) of Arabidopsis thaliana (Mouse-ear cress).